We begin with the raw amino-acid sequence, 952 residues long: Isoleucine--tRNA ligase (952 aa).

The 'HIGH' region motif lies at 58–68 (PYANGDIHIGH). Residue E576 coordinates L-isoleucyl-5'-AMP. Positions 617–621 (KMSKS) match the 'KMSKS' region motif. K620 contacts ATP. C915, C918, C935, and C938 together coordinate Zn(2+).

The protein belongs to the class-I aminoacyl-tRNA synthetase family. IleS type 1 subfamily. As to quaternary structure, monomer. Zn(2+) is required as a cofactor.

It is found in the cytoplasm. It carries out the reaction tRNA(Ile) + L-isoleucine + ATP = L-isoleucyl-tRNA(Ile) + AMP + diphosphate. In terms of biological role, catalyzes the attachment of isoleucine to tRNA(Ile). As IleRS can inadvertently accommodate and process structurally similar amino acids such as valine, to avoid such errors it has two additional distinct tRNA(Ile)-dependent editing activities. One activity is designated as 'pretransfer' editing and involves the hydrolysis of activated Val-AMP. The other activity is designated 'posttransfer' editing and involves deacylation of mischarged Val-tRNA(Ile). In Vibrio atlanticus (strain LGP32) (Vibrio splendidus (strain Mel32)), this protein is Isoleucine--tRNA ligase.